The sequence spans 171 residues: Peptide deformylase (171 aa).

The Fe cation site is built by cysteine 91 and histidine 133. Glutamate 134 is an active-site residue. Histidine 137 contacts Fe cation.

Belongs to the polypeptide deformylase family. It depends on Fe(2+) as a cofactor.

It catalyses the reaction N-terminal N-formyl-L-methionyl-[peptide] + H2O = N-terminal L-methionyl-[peptide] + formate. Functionally, removes the formyl group from the N-terminal Met of newly synthesized proteins. Requires at least a dipeptide for an efficient rate of reaction. N-terminal L-methionine is a prerequisite for activity but the enzyme has broad specificity at other positions. The polypeptide is Peptide deformylase (Edwardsiella ictaluri (strain 93-146)).